The chain runs to 576 residues: Arginine--tRNA ligase (576 aa).

A 'HIGH' region motif is present at residues 122 to 132 (PNVAKQMHVGH).

It belongs to the class-I aminoacyl-tRNA synthetase family. As to quaternary structure, monomer.

The protein localises to the cytoplasm. It catalyses the reaction tRNA(Arg) + L-arginine + ATP = L-arginyl-tRNA(Arg) + AMP + diphosphate. This chain is Arginine--tRNA ligase, found in Yersinia pseudotuberculosis serotype O:1b (strain IP 31758).